The sequence spans 152 residues: Type-1 angiotensin II receptor-associated protein (152 aa).

Residues Met-1–Cys-23 lie on the Extracellular side of the membrane. Residues Ile-24 to Ala-44 form a helical membrane-spanning segment. Over Val-45 to Ser-55 the chain is Cytoplasmic. Residues Met-56 to Tyr-76 traverse the membrane as a helical segment. Topologically, residues Pro-77–Arg-86 are extracellular. Residues Phe-87 to Tyr-107 traverse the membrane as a helical segment. The Cytoplasmic segment spans residues His-108–Tyr-152. Ser-119 and Ser-120 each carry phosphoserine. Thr-128 carries the phosphothreonine modification. Ser-131 bears the Phosphoserine mark.

Interacts with RACK1, and with the carboxy-terminal region of AGTR1.

The protein localises to the endoplasmic reticulum membrane. The protein resides in the golgi apparatus membrane. It localises to the cytoplasmic vesicle membrane. In terms of biological role, appears to be a negative regulator of type-1 angiotensin II receptor-mediated signaling by regulating receptor internalization as well as mechanism of receptor desensitization such as phosphorylation. Also induces a decrease in cell proliferation and angiotensin II-stimulated transcriptional activity. This chain is Type-1 angiotensin II receptor-associated protein (AGTRAP), found in Pongo abelii (Sumatran orangutan).